Here is a 534-residue protein sequence, read N- to C-terminus: Apolipoprotein N-acyltransferase (534 aa).

A run of 7 helical transmembrane segments spans residues 18–38, 39–59, 74–94, 105–125, 127–147, 178–198, and 209–229; these read LLAIAAGAFAVLALPPFGFFA, AMFLSFTLLVWLIDGAAASPD, WLFGFGYFVAGLWWLGHALLV, LAILGLPACLAIFYGLAVALA, IFWSDGMGRIAALAAGFGLME, VIGAMGVTALAVFVFSAPALA, and ALAVLLFAAHLGYGAYALYVA. The 251-residue stretch at 246–496 folds into the CN hydrolase domain; that stretch reads VQPDIDQAAK…TGFIDATVDR (251 aa). The active-site Proton acceptor is Glu-291. Lys-355 is an active-site residue. The active-site Nucleophile is the Cys-408. Residues 504–524 traverse the membrane as a helical segment; it reads TFPRQTYFWLTEALLILIALV.

This sequence belongs to the CN hydrolase family. Apolipoprotein N-acyltransferase subfamily.

Its subcellular location is the cell inner membrane. It carries out the reaction N-terminal S-1,2-diacyl-sn-glyceryl-L-cysteinyl-[lipoprotein] + a glycerophospholipid = N-acyl-S-1,2-diacyl-sn-glyceryl-L-cysteinyl-[lipoprotein] + a 2-acyl-sn-glycero-3-phospholipid + H(+). It participates in protein modification; lipoprotein biosynthesis (N-acyl transfer). In terms of biological role, catalyzes the phospholipid dependent N-acylation of the N-terminal cysteine of apolipoprotein, the last step in lipoprotein maturation. This is Apolipoprotein N-acyltransferase from Rhizobium leguminosarum bv. trifolii (strain WSM2304).